The chain runs to 79 residues: uncharacterized protein (79 aa).

The protein belongs to the asfivirus D79L family.

This is an uncharacterized protein from African swine fever virus (isolate Tick/South Africa/Pretoriuskop Pr4/1996) (ASFV).